We begin with the raw amino-acid sequence, 437 residues long: Nuclear envelope integral membrane protein 1 (437 aa).

The N-terminal stretch at 1–44 is a signal peptide; it reads MAGGIKVSVWSAVGPGPRCWGAGGGGGATWLLLVVAGCVVCGSA. Asn123 carries N-linked (GlcNAc...) asparagine glycosylation. 5 helical membrane-spanning segments follow: residues 159–179, 183–203, 214–234, 244–264, and 288–308; these read PKLFLVFLLGLTLFFCGDLLS, IFYYSTGMSVGIVASLLIVIF, PIYVILVGGWSFSLYLIQLVF, YWHYLLSYILTVGFMSFAVCY, and GLMYSSIQIPHVAFALIVIAL. The tract at residues 184 to 295 is a; required for its colocalization with lamins at the nuclear envelope; the sequence is FYYSTGMSVG…GLGLMYSSIQ (112 aa). Positions 334-403 are b; required for interaction with RAN-GTP; sequence PVPPRLLTEE…LTPNEVSVHE (70 aa). The required for nuclear localization stretch occupies residues 334-437; that stretch reads PVPPRLLTEE…PTFTQNNFLT (104 aa). Ser366, Ser419, and Ser420 each carry phosphoserine. Residues 415–425 show a composition bias toward acidic residues; that stretch reads DEELSSEEEGS. The disordered stretch occupies residues 415-437; sequence DEELSSEEEGSEYPTFTQNNFLT. Residues 428-437 are compositionally biased toward polar residues; it reads PTFTQNNFLT.

The protein belongs to the NEMP family. As to quaternary structure, homooligomer. Interacts with RAN-GTP. Interacts with EMD. In terms of processing, phosphorylated. Phosphorylation may regulate its interaction with RAN-GTP. In the ovary, expression is strongest in primordial follicle oocytes and rapidly declines as oocytes mature and move from the cortex (at protein level).

It localises to the nucleus inner membrane. The protein resides in the nucleus envelope. In terms of biological role, together with EMD, contributes to nuclear envelope stiffness in germ cells. Required for female fertility. Essential for normal erythropoiesis. Required for efficient nuclear envelope opening and enucleation during the late stages of erythroblast maturation. The sequence is that of Nuclear envelope integral membrane protein 1 (Nemp1) from Mus musculus (Mouse).